A 288-amino-acid polypeptide reads, in one-letter code: Putative transcription factor kapC (288 aa).

The segment covering 1–10 has biased composition (pro residues); that stretch reads MQPTLAPAPH. The disordered stretch occupies residues 1 to 121; it reads MQPTLAPAPH…AAQRAFRQRK (121 aa). Low complexity predominate over residues 26–41; the sequence is HDQLLAAHQHLSHPQQ. Positions 42-54 are enriched in pro residues; it reads ARPPPPPPQPPHM. Residues 84-93 are compositionally biased toward polar residues; the sequence is QPDLSGQESP. The bZIP domain maps to 100–163; sequence PLSTSKRAAQ…EYIINLQSRL (64 aa). Residues 101-124 are basic motif; that stretch reads LSTSKRAAQNRAAQRAFRQRKEAH. Low complexity predominate over residues 106-116; the sequence is RAAQNRAAQRA. Residues 128–159 are leucine-zipper; that stretch reads LEGKVKAYETMGEAIKALQAENYQLREYIINL. Disordered stretches follow at residues 172-226 and 242-288; these read ELPG…NDDM and PPTE…PLIS. Positions 202 to 212 are enriched in pro residues; it reads PVPPPTAPQQP. Over residues 213 to 222 the composition is skewed to low complexity; that stretch reads QPAQNQASAP.

It belongs to the bZIP family.

The protein localises to the nucleus. Its function is as follows. Putative transcription factor. The polypeptide is Putative transcription factor kapC (kapC) (Aspergillus clavatus (strain ATCC 1007 / CBS 513.65 / DSM 816 / NCTC 3887 / NRRL 1 / QM 1276 / 107)).